A 365-amino-acid chain; its full sequence is Ribosomal RNA large subunit methyltransferase F (365 aa).

The tract at residues M1–R49 is disordered. Basic and acidic residues predominate over residues A33–R49.

The protein belongs to the methyltransferase superfamily. METTL16/RlmF family.

The protein resides in the cytoplasm. It catalyses the reaction adenosine(1618) in 23S rRNA + S-adenosyl-L-methionine = N(6)-methyladenosine(1618) in 23S rRNA + S-adenosyl-L-homocysteine + H(+). Specifically methylates the adenine in position 1618 of 23S rRNA. The protein is Ribosomal RNA large subunit methyltransferase F of Shewanella baltica (strain OS185).